We begin with the raw amino-acid sequence, 683 residues long: Synaptic vesicle glycoprotein 2B (683 aa).

A disordered region spans residues 1–42 (MDDYKYQDNYGGYAPSDGYYRGNESNPEEDAQSDVTEGHDEE). The Cytoplasmic portion of the chain corresponds to 1-108 (MDDYKYQDNY…MDECGHGRFQ (108 aa)). Position 33 is a phosphoserine (Ser33). Thr36 carries the phosphothreonine modification. The helical transmembrane segment at 109–129 (WILFFVLGLALMADGVEVFVV) threads the bilayer. Over 130–148 (SFALPSAEKDMCLSSSKKG) the chain is Extracellular. A helical transmembrane segment spans residues 149–169 (MLGMIVYLGMMAGAFILGGLA). Residues 170-182 (DKLGRKRVLSMSL) are Cytoplasmic-facing. The chain crosses the membrane as a helical span at residues 183–203 (AVNASFASLSSFVQGYGAFLF). The Extracellular portion of the chain corresponds to 204-205 (CR). The chain crosses the membrane as a helical span at residues 206-226 (LISGIGIGGALPIVFAYFSEF). The Cytoplasmic segment spans residues 227–237 (LSREKRGEHLS). Residues 238 to 258 (WLGIFWMTGGLYASAMAWSII) traverse the membrane as a helical segment. The Extracellular segment spans residues 259–277 (PHYGWGFSMGTNYHFHSWR). A helical transmembrane segment spans residues 278–298 (VFVIVCALPCTVSMVALKFMP). The Cytoplasmic segment spans residues 299–390 (ESPRFLLEMG…CVMGPYRMNT (92 aa)). Residues 391–411 (LILAVVWFAMAFSYYGLTVWF) form a helical membrane-spanning segment. The Extracellular segment spans residues 412–535 (PDMIRYFQDE…CHMDLEQDND (124 aa)). Phosphotyrosine is present on Tyr423. Asn441, Asn491, and Asn516 each carry an N-linked (GlcNAc...) asparagine glycan. The chain crosses the membrane as a helical span at residues 536–556 (FLIYLVSFLGSLSVLPGNIIS). Topologically, residues 557–565 (ALLMDRIGR) are cytoplasmic. The chain crosses the membrane as a helical span at residues 566 to 586 (LKMIGGSMLISAVCCFFLFFG). Over 587 to 592 (NSESAM) the chain is Extracellular. The chain crosses the membrane as a helical span at residues 593–613 (IGWQCLFCGTSIAAWNALDVI). Over 614 to 626 (TVELYPTNQRATA) the chain is Cytoplasmic. The chain crosses the membrane as a helical span at residues 627–649 (FGILNGLCKFGAILGNTIFASFV). At 650 to 653 (GITK) the chain is on the extracellular side. Residues 654–672 (VVPILLAAASLVGGGLIAL) form a helical membrane-spanning segment. Residues 673 to 683 (RLPETREQVLM) are Cytoplasmic-facing.

It belongs to the major facilitator superfamily. In terms of assembly, interacts with SYT1 in a calcium-independent manner. Forms a complex with SYT1, syntaxin-1 and SNAP25. As to quaternary structure, (Microbial infection) Interacts with C.botulinum neurotoxin type A2 (BoNT/A, botA). Interaction is improved by glycosylation of SV2. In terms of processing, N-glycosylated. The N-terminal cytoplasmic domain is phosphorylated by CK1.

The protein resides in the cytoplasmic vesicle. Its subcellular location is the secretory vesicle. It localises to the synaptic vesicle membrane. It is found in the acrosome. Its function is as follows. Probably plays a role in the control of regulated secretion in neural and endocrine cells. (Microbial infection) Receptor for the C.botulinum neurotoxin type A2 (BoNT/A, botA); glycosylation is not essential but enhances the interaction. Probably also serves as a receptor for the closely related C.botulinum neurotoxin type A1. The protein is Synaptic vesicle glycoprotein 2B (SV2B) of Homo sapiens (Human).